We begin with the raw amino-acid sequence, 339 residues long: Anthranilate phosphoribosyltransferase (339 aa).

5-phospho-alpha-D-ribose 1-diphosphate contacts are provided by residues Gly-81, 84–85, Ser-89, 91–94, 109–117, and Ala-121; these read GD, NVSS, and KHGNRALSS. Anthranilate is bound at residue Gly-81. Ser-93 serves as a coordination point for Mg(2+). Asn-112 serves as a coordination point for anthranilate. Arg-167 contributes to the anthranilate binding site. Positions 225 and 226 each coordinate Mg(2+).

Belongs to the anthranilate phosphoribosyltransferase family. Homodimer. Mg(2+) is required as a cofactor.

It carries out the reaction N-(5-phospho-beta-D-ribosyl)anthranilate + diphosphate = 5-phospho-alpha-D-ribose 1-diphosphate + anthranilate. It participates in amino-acid biosynthesis; L-tryptophan biosynthesis; L-tryptophan from chorismate: step 2/5. Catalyzes the transfer of the phosphoribosyl group of 5-phosphorylribose-1-pyrophosphate (PRPP) to anthranilate to yield N-(5'-phosphoribosyl)-anthranilate (PRA). The polypeptide is Anthranilate phosphoribosyltransferase (Brucella suis biovar 1 (strain 1330)).